Consider the following 318-residue polypeptide: NADH-ubiquinone oxidoreductase chain 1 (318 aa).

Helical transmembrane passes span 3–23 (LINL…LTLL), 69–89 (MLFI…WTPL), 102–122 (MLFI…SGWA), 144–164 (VTLA…TLLS), 171–191 (YIWL…STLA), 222–242 (LFFL…IILF), 253–273 (ELYT…FLWI), and 294–314 (LPLT…LAGI).

It belongs to the complex I subunit 1 family. As to quaternary structure, core subunit of respiratory chain NADH dehydrogenase (Complex I) which is composed of 45 different subunits.

It is found in the mitochondrion inner membrane. The catalysed reaction is a ubiquinone + NADH + 5 H(+)(in) = a ubiquinol + NAD(+) + 4 H(+)(out). In terms of biological role, core subunit of the mitochondrial membrane respiratory chain NADH dehydrogenase (Complex I) which catalyzes electron transfer from NADH through the respiratory chain, using ubiquinone as an electron acceptor. Essential for the catalytic activity and assembly of complex I. This Murina florium (Flores tube-nosed bat) protein is NADH-ubiquinone oxidoreductase chain 1 (MT-ND1).